A 223-amino-acid polypeptide reads, in one-letter code: UPF0502 protein Sbal_1765 (223 aa).

The protein belongs to the UPF0502 family.

This is UPF0502 protein Sbal_1765 from Shewanella baltica (strain OS155 / ATCC BAA-1091).